A 203-amino-acid polypeptide reads, in one-letter code: Urease accessory protein UreG (203 aa).

GTP is bound at residue 14–21 (GPVGSGKT).

It belongs to the SIMIBI class G3E GTPase family. UreG subfamily. Homodimer. UreD, UreF and UreG form a complex that acts as a GTP-hydrolysis-dependent molecular chaperone, activating the urease apoprotein by helping to assemble the nickel containing metallocenter of UreC. The UreE protein probably delivers the nickel.

It localises to the cytoplasm. Facilitates the functional incorporation of the urease nickel metallocenter. This process requires GTP hydrolysis, probably effectuated by UreG. This chain is Urease accessory protein UreG, found in Rhizobium etli (strain ATCC 51251 / DSM 11541 / JCM 21823 / NBRC 15573 / CFN 42).